Reading from the N-terminus, the 215-residue chain is UPF0502 protein YceH (215 aa).

Lys80 is subject to N6-acetyllysine.

This sequence belongs to the UPF0502 family.

The chain is UPF0502 protein YceH from Escherichia coli (strain K12 / MC4100 / BW2952).